The primary structure comprises 202 residues: Dephospho-CoA kinase (202 aa).

Residues 5–202 (VIGLTGGIGS…KKYLTLTKMV (198 aa)) enclose the DPCK domain. Position 13–18 (13–18 (GSGKTT)) interacts with ATP.

The protein belongs to the CoaE family.

It is found in the cytoplasm. The catalysed reaction is 3'-dephospho-CoA + ATP = ADP + CoA + H(+). It participates in cofactor biosynthesis; coenzyme A biosynthesis; CoA from (R)-pantothenate: step 5/5. Functionally, catalyzes the phosphorylation of the 3'-hydroxyl group of dephosphocoenzyme A to form coenzyme A. The polypeptide is Dephospho-CoA kinase (Colwellia psychrerythraea (strain 34H / ATCC BAA-681) (Vibrio psychroerythus)).